The sequence spans 98 residues: Putative pterin-4-alpha-carbinolamine dehydratase (98 aa).

It belongs to the pterin-4-alpha-carbinolamine dehydratase family.

It carries out the reaction (4aS,6R)-4a-hydroxy-L-erythro-5,6,7,8-tetrahydrobiopterin = (6R)-L-erythro-6,7-dihydrobiopterin + H2O. The chain is Putative pterin-4-alpha-carbinolamine dehydratase from Mesorhizobium japonicum (strain LMG 29417 / CECT 9101 / MAFF 303099) (Mesorhizobium loti (strain MAFF 303099)).